The sequence spans 648 residues: Probable alpha-galactosidase D (648 aa).

A signal peptide spans 1–17; that stretch reads MESIVWLLLLSPALVAG. N-linked (GlcNAc...) asparagine glycans are attached at residues Asn84 and Asn90. Cys123 and Cys156 form a disulfide bridge. Asp154 serves as the catalytic Nucleophile. 199-203 contributes to the substrate binding site; sequence EWGID. Asp221 serves as the catalytic Proton donor. Residues Asn339, Asn505, and Asn572 are each glycosylated (N-linked (GlcNAc...) asparagine).

The protein belongs to the glycosyl hydrolase 27 family.

It is found in the secreted. It carries out the reaction Hydrolysis of terminal, non-reducing alpha-D-galactose residues in alpha-D-galactosides, including galactose oligosaccharides, galactomannans and galactolipids.. Hydrolyzes a variety of simple alpha-D-galactoside as well as more complex molecules such as oligosaccharides and polysaccharides. The sequence is that of Probable alpha-galactosidase D (aglD) from Neosartorya fischeri (strain ATCC 1020 / DSM 3700 / CBS 544.65 / FGSC A1164 / JCM 1740 / NRRL 181 / WB 181) (Aspergillus fischerianus).